The following is a 304-amino-acid chain: Secreted mono- and diacylglycerol lipase MDL4 (304 aa).

A signal peptide spans 1–19; sequence MRFGGVVSLVLGFIVSVLA. Cys55 and Cys297 are disulfide-bonded. 2 N-linked (GlcNAc...) asparagine glycosylation sites follow: Asn102 and Asn161. The Nucleophile role is filled by Ser171. Residue Asp228 is part of the active site. The N-linked (GlcNAc...) asparagine glycan is linked to Asn253. Residue His281 is part of the active site.

This sequence belongs to the AB hydrolase superfamily. Lipase family. Class 3 subfamily.

It is found in the secreted. The protein resides in the cell wall. The enzyme catalyses a monoacylglycerol + H2O = glycerol + a fatty acid + H(+). The catalysed reaction is a diacylglycerol + H2O = a monoacylglycerol + a fatty acid + H(+). Secreted lipase involved in Dandruff and seborrheic dermatitis (D/SD) probably via lipase-mediated breakdown of sebaceous lipids and release of irritating free fatty acids. Shows activity against monoglyceride and diglyceride substrates, but not triglyceride substrates and does not exhibit regio-selective production of diacylglycerols. Cleaves oleic acid from 1,2 isomers of diolein on both the 1 and the 2 position of the glycerol backbone, resulting mainly in free fatty acids but no monoolein is detected. Shows activity on monoolein and liberates mostly free fatty acids, but can also perform the reverse reaction and produce diolein. In Malassezia globosa (strain ATCC MYA-4612 / CBS 7966) (Dandruff-associated fungus), this protein is Secreted mono- and diacylglycerol lipase MDL4.